Reading from the N-terminus, the 257-residue chain is MYQKLLLVPLLLTSALASPHDASSHQKFHQLNERAAFPIPASKGSQTFKEPYYVKGTYDGGMKTFGRGVKCTGQKEGGDKDAVFIVADGGILRNAIIGADQIEGVHCEGSCTIENVWWQEVCEDALTFKGTGTGVHKVIGGGAQGADDKVIQHNSGGSAIIQDFTVQNFGKLYRSCGNCKKQFKRTVQISGVKASNGKTLVGINPNLGDSATIDGCASSVKEICVEYEGTDNNGKEPKKAHSGPSNTCKFKEPLASC.

A signal peptide spans 1-17; sequence MYQKLLLVPLLLTSALA.

This sequence belongs to the polysaccharide lyase 3 family. The cofactor is Ca(2+).

The protein resides in the secreted. It carries out the reaction Eliminative cleavage of (1-&gt;4)-alpha-D-galacturonan to give oligosaccharides with 4-deoxy-alpha-D-galact-4-enuronosyl groups at their non-reducing ends.. Functionally, pectinolytic enzyme consist of four classes of enzymes: pectin lyase, polygalacturonase, pectin methylesterase and rhamnogalacturonase. Among pectinolytic enzymes, pectin lyase is the most important in depolymerization of pectin, since it cleaves internal glycosidic bonds of highly methylated pectins. Favors pectate, the anion, over pectin, the methyl ester. The protein is Probable pectate lyase E (plyE) of Aspergillus flavus (strain ATCC 200026 / FGSC A1120 / IAM 13836 / NRRL 3357 / JCM 12722 / SRRC 167).